The sequence spans 426 residues: MTEFIGSRISLISKSDIRYVGILQDINSQDSTLALKHVRWCGTEGRKQDPSQEIPPSDNVFDYIVFRGSDVKDLRIEEPATTPSAPPVQPPNDPAIIGSNSGQYNWNQAQTAQPPQPVQPNPYGAPYQQAPPAGAPYYMYPNAPAQFVPPGGLPLGTPLDASTPAVPYYGAPDQQQMGQRPEFAQNVSQGFAGQAPYNVRPGYGMPSNQKPPNFAPGMPAPGPTAVSASPSLQSMPPTNGVIPGAQPSIEASIEKESTSIRNSTVTNDRVVNTTVDVSQSQTVETSGPSKEVPTTQPDASAAKPRTEFDFQTANQKFQSMKDDLLKGKNDEEAEEFYKPKQSFFDNISCESKEKGMEAADRRALRDRERSLNMETFGVAGSGNRGRRGRGRGRGGRGRGRGYARNQYNQYRNSNGSQPRAQPANDQ.

One can recognise a Sm domain in the interval 1–80 (MTEFIGSRIS…VKDLRIEEPA (80 aa)). Disordered regions lie at residues 79-100 (PATTPSAPPVQPPNDPAIIGSN), 204-305 (GMPS…AKPR), and 348-426 (SCES…ANDQ). A compositionally biased stretch (pro residues) spans 84–93 (SAPPVQPPND). Residues 226–237 (VSASPSLQSMPP) show a composition bias toward polar residues. Residues 261–278 (RNSTVTNDRVVNTTVDVS) are compositionally biased toward low complexity. The span at 279–298 (QSQTVETSGPSKEVPTTQPD) shows a compositional bias: polar residues. The DFDF domain occupies 296–332 (QPDASAAKPRTEFDFQTANQKFQSMKDDLLKGKNDEE). Positions 335–351 (EFYKPKQSFFDNISCES) match the FFD box motif. Residues 350 to 371 (ESKEKGMEAADRRALRDRERSL) are compositionally biased toward basic and acidic residues. The short motif at 360-380 (DRRALRDRERSLNMETFGVAG) is the TFG box element. Basic residues predominate over residues 384–401 (RGRRGRGRGRGGRGRGRG). Residues 405–426 (NQYNQYRNSNGSQPRAQPANDQ) show a composition bias toward polar residues.

In terms of biological role, required for G2/M phase checkpoint control. This chain is Protein sum2 (sum2), found in Schizosaccharomyces pombe (strain 972 / ATCC 24843) (Fission yeast).